The following is a 387-amino-acid chain: GTPase Obg (387 aa).

An Obg domain is found at 1-159; it reads MKFVDEAIIR…RSLKLELLLL (159 aa). Positions 160-333 constitute an OBG-type G domain; it reads ADVGLLGMPN…LALKLLDFID (174 aa). Residues 166–173, 191–195, 213–216, 283–286, and 314–316 each bind GTP; these read GMPNAGKS, FTTLV, DIPG, NKAD, and SAY. Residues S173 and T193 each coordinate Mg(2+).

It belongs to the TRAFAC class OBG-HflX-like GTPase superfamily. OBG GTPase family. As to quaternary structure, monomer. It depends on Mg(2+) as a cofactor.

The protein resides in the cytoplasm. Its function is as follows. An essential GTPase which binds GTP, GDP and possibly (p)ppGpp with moderate affinity, with high nucleotide exchange rates and a fairly low GTP hydrolysis rate. Plays a role in control of the cell cycle, stress response, ribosome biogenesis and in those bacteria that undergo differentiation, in morphogenesis control. The polypeptide is GTPase Obg (Shewanella pealeana (strain ATCC 700345 / ANG-SQ1)).